Here is a 324-residue protein sequence, read N- to C-terminus: NADH-ubiquinone oxidoreductase chain 1 (324 aa).

Helical transmembrane passes span 9–29, 43–63, 75–95, 106–126, 146–166, 177–197, 228–250, 259–279, and 299–319; these read ILNPLAFIVPVLLAVAFLTLL, PNIVGPYGLLQPIADGVKLFI, ILFILTPMLALTLAMTLWAPL, LAILLFVALSSLAVYSILGSG, ISYEVSLGLILLSLIIFTGGF, SIWLIIPAWPLAAMWYISTLA, LFFLAEYANILFMNTLSASLFLG, ELTTMNLMTKAAVLSLVFLWV, and FLPLTLALVIWHLALPITFAG.

The protein belongs to the complex I subunit 1 family.

The protein resides in the mitochondrion inner membrane. It catalyses the reaction a ubiquinone + NADH + 5 H(+)(in) = a ubiquinol + NAD(+) + 4 H(+)(out). Core subunit of the mitochondrial membrane respiratory chain NADH dehydrogenase (Complex I) that is believed to belong to the minimal assembly required for catalysis. Complex I functions in the transfer of electrons from NADH to the respiratory chain. The immediate electron acceptor for the enzyme is believed to be ubiquinone. This chain is NADH-ubiquinone oxidoreductase chain 1 (MT-ND1), found in Tetraodon nigroviridis (Spotted green pufferfish).